Here is a 354-residue protein sequence, read N- to C-terminus: Uroporphyrinogen decarboxylase (354 aa).

Substrate-binding positions include 27 to 31 (RQAGR), Asp77, Tyr154, Thr209, and His327.

It belongs to the uroporphyrinogen decarboxylase family. In terms of assembly, homodimer.

It localises to the cytoplasm. It carries out the reaction uroporphyrinogen III + 4 H(+) = coproporphyrinogen III + 4 CO2. The protein operates within porphyrin-containing compound metabolism; protoporphyrin-IX biosynthesis; coproporphyrinogen-III from 5-aminolevulinate: step 4/4. Its function is as follows. Catalyzes the decarboxylation of four acetate groups of uroporphyrinogen-III to yield coproporphyrinogen-III. The protein is Uroporphyrinogen decarboxylase of Salmonella paratyphi B (strain ATCC BAA-1250 / SPB7).